A 602-amino-acid chain; its full sequence is NAD-dependent protein deacetylase sir-2.1 (602 aa).

Residues Pro-25–Gln-57 form a disordered region. Residues Glu-46–Gln-57 are compositionally biased toward polar residues. Positions Lys-119–Ser-374 constitute a Deacetylase sirtuin-type domain. Residues Gly-144–Tyr-163 and Gln-228–Asp-231 contribute to the NAD(+) site. His-246 functions as the Proton acceptor in the catalytic mechanism. The Zn(2+) site is built by Cys-254, Cys-257, Cys-278, and Cys-281. NAD(+)-binding positions include Gly-318–Ser-320, Asn-343–Glu-345, and Cys-360. Disordered regions lie at residues Gln-411–Val-468 and Arg-520–Ser-551.

Belongs to the sirtuin family. Class I subfamily. Interacts with ftt-2 and par-5. Interacts with daf-16 following heat-shock, which causes daf-16 to accumulate in the nucleus. Interaction with daf-16 is promoted by ftt-2. Zn(2+) serves as cofactor.

It is found in the nucleus. The catalysed reaction is N(6)-acetyl-L-lysyl-[protein] + NAD(+) + H2O = 2''-O-acetyl-ADP-D-ribose + nicotinamide + L-lysyl-[protein]. Functionally, NAD-dependent deacetylase. Required for a reduction of the 'Lys-16' acetylation of histone H4 (H4K16ac) on dosage-compensated X chromosomes in hermaphrodites. Functions upstream of daf-16 in the insulin-like signaling pathway, promoting daf-16 mediated transcriptional activation and increased life-span. May also regulate life-span independently of daf-16 by modulating the transcription of genes involved in the stress response of the endoplasmic reticulum (ER). Acts upstream of the nicotinic acid metabolism pathway, which may be linked to the regulation of longevity. Plays a role in ascaroside-mediated longevity and stress resistance. The chain is NAD-dependent protein deacetylase sir-2.1 (sir-2.1) from Caenorhabditis briggsae.